Reading from the N-terminus, the 95-residue chain is Co-chaperonin GroES (95 aa).

This sequence belongs to the GroES chaperonin family. As to quaternary structure, heptamer of 7 subunits arranged in a ring. Interacts with the chaperonin GroEL.

The protein localises to the cytoplasm. Functionally, together with the chaperonin GroEL, plays an essential role in assisting protein folding. The GroEL-GroES system forms a nano-cage that allows encapsulation of the non-native substrate proteins and provides a physical environment optimized to promote and accelerate protein folding. GroES binds to the apical surface of the GroEL ring, thereby capping the opening of the GroEL channel. This chain is Co-chaperonin GroES, found in Chlorobium luteolum (strain DSM 273 / BCRC 81028 / 2530) (Pelodictyon luteolum).